A 284-amino-acid polypeptide reads, in one-letter code: Release factor glutamine methyltransferase (284 aa).

S-adenosyl-L-methionine is bound by residues 123 to 127, aspartate 146, tryptophan 174, and asparagine 189; that span reads GTGTG. Substrate is bound at residue 189–192; the sequence is NPPY.

The protein belongs to the protein N5-glutamine methyltransferase family. PrmC subfamily.

The catalysed reaction is L-glutaminyl-[peptide chain release factor] + S-adenosyl-L-methionine = N(5)-methyl-L-glutaminyl-[peptide chain release factor] + S-adenosyl-L-homocysteine + H(+). In terms of biological role, methylates the class 1 translation termination release factors RF1/PrfA and RF2/PrfB on the glutamine residue of the universally conserved GGQ motif. The sequence is that of Release factor glutamine methyltransferase from Francisella tularensis subsp. tularensis (strain SCHU S4 / Schu 4).